The primary structure comprises 418 residues: NADH-quinone oxidoreductase subunit D (418 aa).

The protein belongs to the complex I 49 kDa subunit family. As to quaternary structure, NDH-1 is composed of 14 different subunits. Subunits NuoB, C, D, E, F, and G constitute the peripheral sector of the complex.

The protein localises to the cell inner membrane. The catalysed reaction is a quinone + NADH + 5 H(+)(in) = a quinol + NAD(+) + 4 H(+)(out). Functionally, NDH-1 shuttles electrons from NADH, via FMN and iron-sulfur (Fe-S) centers, to quinones in the respiratory chain. The immediate electron acceptor for the enzyme in this species is believed to be ubiquinone. Couples the redox reaction to proton translocation (for every two electrons transferred, four hydrogen ions are translocated across the cytoplasmic membrane), and thus conserves the redox energy in a proton gradient. The chain is NADH-quinone oxidoreductase subunit D from Neisseria meningitidis serogroup C (strain 053442).